Consider the following 196-residue polypeptide: CMRF35-like molecule 2 (196 aa).

The first 17 residues, 1–17 (MRLCAGLLLLCFQGCLS), serve as a signal peptide directing secretion. Residues 18-122 (LTGPGSVSGY…DSWSRDPSVS (105 aa)) form the Ig-like V-type domain. Topologically, residues 18-171 (LTGPGSVSGY…QLWSLLSSIQ (154 aa)) are extracellular. A disulfide bridge connects residues C36 and C104. The N-linked (GlcNAc...) asparagine glycan is linked to N84. The chain crosses the membrane as a helical span at residues 172-192 (FQVLVFLKLPLFLSMLCAIFW). The Cytoplasmic segment spans residues 193–196 (VNRL).

It belongs to the CD300 family. Interacts with TYROBP.

The protein resides in the cell membrane. In terms of biological role, probably acts as an activating receptor. This is CMRF35-like molecule 2 (Cd300e) from Mus musculus (Mouse).